A 125-amino-acid polypeptide reads, in one-letter code: MARLAGVDIPREKRLEIALTYIYGVGKTRAHETLAATGISADVRVKDLTDAELVQLRDYIEGNYKVEGDLRREVAADIRRKVEIGSYEGLRHRKGLPVRGQRTKTNARTRKGPKRTVAGKKKAGR.

Positions 93–125 (RKGLPVRGQRTKTNARTRKGPKRTVAGKKKAGR) are disordered.

Belongs to the universal ribosomal protein uS13 family. In terms of assembly, part of the 30S ribosomal subunit. Forms a loose heterodimer with protein S19. Forms two bridges to the 50S subunit in the 70S ribosome.

Functionally, located at the top of the head of the 30S subunit, it contacts several helices of the 16S rRNA. In the 70S ribosome it contacts the 23S rRNA (bridge B1a) and protein L5 of the 50S subunit (bridge B1b), connecting the 2 subunits; these bridges are implicated in subunit movement. Contacts the tRNAs in the A and P-sites. The chain is Small ribosomal subunit protein uS13 from Paenarthrobacter aurescens (strain TC1).